A 958-amino-acid chain; its full sequence is Valine--tRNA ligase (958 aa).

The 'HIGH' region motif lies at 45–55 (PNVTGSLHMGH). Positions 571–575 (KMSKS) match the 'KMSKS' region motif. Lys-574 lines the ATP pocket. Residues 892–958 (AAERTRLDKE…EALERLKQAS (67 aa)) are a coiled coil.

This sequence belongs to the class-I aminoacyl-tRNA synthetase family. ValS type 1 subfamily. In terms of assembly, monomer.

The protein localises to the cytoplasm. The enzyme catalyses tRNA(Val) + L-valine + ATP = L-valyl-tRNA(Val) + AMP + diphosphate. In terms of biological role, catalyzes the attachment of valine to tRNA(Val). As ValRS can inadvertently accommodate and process structurally similar amino acids such as threonine, to avoid such errors, it has a 'posttransfer' editing activity that hydrolyzes mischarged Thr-tRNA(Val) in a tRNA-dependent manner. The polypeptide is Valine--tRNA ligase (Bradyrhizobium diazoefficiens (strain JCM 10833 / BCRC 13528 / IAM 13628 / NBRC 14792 / USDA 110)).